Here is a 349-residue protein sequence, read N- to C-terminus: UPF0324 inner membrane protein YeiH (349 aa).

Residues 1 to 12 (MTELTLQNHRRT) lie on the Periplasmic side of the membrane. Residues 13–35 (MWHFIPGLALSAVITGVALWGGA) form a helical membrane-spanning segment. Residues 36-38 (IPA) are Cytoplasmic-facing. A helical transmembrane segment spans residues 39 to 61 (VAGAGFSALTLAILLGMVIGNTV). Over 62–99 (YPQIWKQCDGGVLFAKQHLLRLGIILYGFRLTFSQIAD) the chain is Periplasmic. The chain crosses the membrane as a helical span at residues 100–122 (VGISGIVIDVLTLSSTFMLACFL). Residues 123-131 (GQKVFGLDR) lie on the Cytoplasmic side of the membrane. Residues 132–151 (HTSWLIGAGSSICGAAAVLA) traverse the membrane as a helical segment. The Periplasmic segment spans residues 152-162 (TEPVVKAEASK). A helical membrane pass occupies residues 163–185 (VTVAVATVVIFGTIAIFLYPAMY). Topologically, residues 186–261 (PLLAHWFSPE…SPATGAEKSK (76 aa)) are cytoplasmic. Residues 262-284 (ITIPWFAIFFIVVAIFNSFHLLP) traverse the membrane as a helical segment. Residues 285–290 (KAVVDM) lie on the Periplasmic side of the membrane. The chain crosses the membrane as a helical span at residues 291–313 (LVTLDTVLLAMAMAALGLTTHVS). Residues 314-322 (ALKKAGAKP) are Cytoplasmic-facing. The chain crosses the membrane as a helical span at residues 323–345 (LLMALALFAWLIIGGGAINVLIH). Residues 346 to 349 (SLIA) are Periplasmic-facing.

The protein belongs to the UPF0324 family.

The protein resides in the cell inner membrane. The protein is UPF0324 inner membrane protein YeiH (yeiH) of Salmonella typhi.